Consider the following 331-residue polypeptide: UPF0194 membrane protein YbhG (331 aa).

The first 19 residues, 1–19 (MKKPVVIGLAIAAIVAVIA), serve as a signal peptide directing secretion. The stretch at 107–208 (EEIAQAAAAV…LDLQDTTLIA (102 aa)) forms a coiled coil.

It belongs to the UPF0194 family.

Its subcellular location is the periplasm. In Salmonella gallinarum (strain 287/91 / NCTC 13346), this protein is UPF0194 membrane protein YbhG.